The sequence spans 141 residues: Protein X (141 aa).

The segment at 22–52 (GPQSSGPPFPRPAAGSAASSASSPSPSDESD) is disordered. The span at 33 to 48 (PAAGSAASSASSPSPS) shows a compositional bias: low complexity. Residues 68–113 (PCCLVFTCADLRTMDSTVNFVSWHAKRQLGMPSKDLWTPYIKDQLL) are mitochondrial targeting sequence.

This sequence belongs to the orthohepadnavirus protein X family. In terms of assembly, may form homodimer. May interact with host CEBPA, CFLAR, CREB1, DDB1, E4F1, HBXIP, HSPD1/HSP60, NFKBIA, POLR2E and SMAD4. Interacts with host SMC5-SMC6 complex and induces its degradation. Interacts with host TRPC4AP; leading to prevent ubiquitination of TRPC4AP. Interacts with host PLSCR1; this interaction promotes ubiquitination and degradation of HBx and impairs HBx-mediated cell proliferation. A fraction may be phosphorylated in insect cells and HepG2 cells, a human hepatoblastoma cell line. Phosphorylated in vitro by host protein kinase C or mitogen-activated protein kinase. N-acetylated in insect cells.

It is found in the host cytoplasm. It localises to the host nucleus. Its subcellular location is the host mitochondrion. In terms of biological role, multifunctional protein that plays a role in silencing host antiviral defenses and promoting viral transcription. Does not seem to be essential for HBV infection. May be directly involved in development of cirrhosis and liver cancer (hepatocellular carcinoma). Most of cytosolic activities involve modulation of cytosolic calcium. The effect on apoptosis is controversial depending on the cell types in which the studies have been conducted. May induce apoptosis by localizing in mitochondria and causing loss of mitochondrial membrane potential. May also modulate apoptosis by binding host CFLAR, a key regulator of the death-inducing signaling complex (DISC). Promotes viral transcription by using the host E3 ubiquitin ligase DDB1 to target the SMC5-SMC6 complex to proteasomal degradation. This host complex would otherwise bind to viral episomal DNA, and prevents its transcription. Moderately stimulates transcription of many different viral and cellular transcription elements. Promoters and enhancers stimulated by HBx contain DNA binding sites for NF-kappa-B, AP-1, AP-2, c-EBP, ATF/CREB, or the calcium-activated factor NF-AT. The chain is Protein X from Woodchuck hepatitis B virus (isolate w64/pWS23) (WHV).